Consider the following 572-residue polypeptide: Urease subunit alpha (572 aa).

Residues Gly-136 to Phe-572 enclose the Urease domain. The Ni(2+) site is built by His-141, His-143, and Lys-224. Lys-224 bears the N6-carboxylysine mark. Substrate is bound at residue His-226. Positions 253 and 279 each coordinate Ni(2+). His-327 serves as the catalytic Proton donor. Ni(2+) is bound at residue Asp-367.

This sequence belongs to the metallo-dependent hydrolases superfamily. Urease alpha subunit family. As to quaternary structure, heterotrimer of UreA (gamma), UreB (beta) and UreC (alpha) subunits. Three heterotrimers associate to form the active enzyme. Ni cation serves as cofactor. Post-translationally, carboxylation allows a single lysine to coordinate two nickel ions.

It localises to the cytoplasm. It catalyses the reaction urea + 2 H2O + H(+) = hydrogencarbonate + 2 NH4(+). The protein operates within nitrogen metabolism; urea degradation; CO(2) and NH(3) from urea (urease route): step 1/1. This Actinobacillus pleuropneumoniae serotype 7 (strain AP76) protein is Urease subunit alpha.